The chain runs to 151 residues: Large ribosomal subunit protein bL9 (151 aa).

Belongs to the bacterial ribosomal protein bL9 family.

Functionally, binds to the 23S rRNA. The protein is Large ribosomal subunit protein bL9 of Rhodococcus erythropolis (strain PR4 / NBRC 100887).